The following is a 245-amino-acid chain: Sugar fermentation stimulation protein homolog (245 aa).

This sequence belongs to the SfsA family.

This is Sugar fermentation stimulation protein homolog from Yersinia pseudotuberculosis serotype I (strain IP32953).